Reading from the N-terminus, the 154-residue chain is MWFFNKNLKVLAPCDGTIITLDEVEDEVFKERMLGDGFAINPKSNDFHAPVSGKLVTAFPTKHAFGIQTKSGVEILLHIGLDTVSLDGNGFESFVTQDQEVNAGDKLVTVDLKSVAKKVPSIKSPIIFTNNGGKTLEIVKMGEVKQGDVVAILK.

Positions 26 to 130 (DEVFKERMLG…SIKSPIIFTN (105 aa)) constitute a PTS EIIA type-1 domain. Residues H63 and H78 each contribute to the Zn(2+) site. The active-site Tele-phosphohistidine intermediate; for EIIA activity is the H78. H78 carries the post-translational modification Phosphohistidine; by HPr.

In terms of assembly, heterodimer with glycerol kinase (glpk). Requires Zn(2+) as cofactor.

The protein localises to the cytoplasm. Its function is as follows. The phosphoenolpyruvate-dependent sugar phosphotransferase system (sugar PTS), a major carbohydrate active transport system, catalyzes the phosphorylation of incoming sugar substrates concomitantly with their translocation across the cell membrane. The enzyme II complex composed of PtsG and Crr is involved in glucose transport. The chain is PTS system glucose-specific EIIA component (crr) from Mycoplasma capricolum subsp. capricolum (strain California kid / ATCC 27343 / NCTC 10154).